Reading from the N-terminus, the 424-residue chain is UDP-N-acetylglucosamine 1-carboxyvinyltransferase (424 aa).

Position 22-23 (22-23 (KN)) interacts with phosphoenolpyruvate. Position 93 (Arg-93) interacts with UDP-N-acetyl-alpha-D-glucosamine. The active-site Proton donor is Cys-117. Cys-117 carries the 2-(S-cysteinyl)pyruvic acid O-phosphothioketal modification. Residues 122-126 (RPVDL), 162-165 (KVSV), Asp-307, and Ile-329 contribute to the UDP-N-acetyl-alpha-D-glucosamine site.

Belongs to the EPSP synthase family. MurA subfamily.

Its subcellular location is the cytoplasm. It carries out the reaction phosphoenolpyruvate + UDP-N-acetyl-alpha-D-glucosamine = UDP-N-acetyl-3-O-(1-carboxyvinyl)-alpha-D-glucosamine + phosphate. It participates in cell wall biogenesis; peptidoglycan biosynthesis. Its function is as follows. Cell wall formation. Adds enolpyruvyl to UDP-N-acetylglucosamine. In Haemophilus influenzae (strain PittEE), this protein is UDP-N-acetylglucosamine 1-carboxyvinyltransferase.